Here is an 873-residue protein sequence, read N- to C-terminus: Leucine--tRNA ligase (873 aa).

Residues P42–H52 carry the 'HIGH' region motif. The tract at residues P624 to P643 is disordered. The 'KMSKS' region motif lies at K632–S636. K635 is a binding site for ATP.

The protein belongs to the class-I aminoacyl-tRNA synthetase family.

The protein localises to the cytoplasm. The catalysed reaction is tRNA(Leu) + L-leucine + ATP = L-leucyl-tRNA(Leu) + AMP + diphosphate. The chain is Leucine--tRNA ligase from Pseudomonas aeruginosa (strain LESB58).